Here is a 298-residue protein sequence, read N- to C-terminus: GTPase Era (298 aa).

One can recognise an Era-type G domain in the interval 8–176 (RSGSVAVIGR…VSDLLKLVPE (169 aa)). The segment at 16-23 (GRPNVGKS) is G1. 16–23 (GRPNVGKS) serves as a coordination point for GTP. The segment at 42–46 (QTTRH) is G2. The G3 stretch occupies residues 63–66 (DTPG). GTP is bound by residues 63–67 (DTPGL) and 125–128 (NKVD). Residues 125–128 (NKVD) form a G4 region. The tract at residues 155–157 (VSA) is G5. Positions 199 to 283 (VREQLMRQLG…FLETWVRVRE (85 aa)) constitute a KH type-2 domain.

Belongs to the TRAFAC class TrmE-Era-EngA-EngB-Septin-like GTPase superfamily. Era GTPase family. As to quaternary structure, monomer.

Its subcellular location is the cytoplasm. It localises to the cell inner membrane. Functionally, an essential GTPase that binds both GDP and GTP, with rapid nucleotide exchange. Plays a role in 16S rRNA processing and 30S ribosomal subunit biogenesis and possibly also in cell cycle regulation and energy metabolism. In Xanthomonas campestris pv. campestris (strain 8004), this protein is GTPase Era.